A 1210-amino-acid polypeptide reads, in one-letter code: Histone-lysine N-methyltransferase EHMT2 (1210 aa).

Residues 1–23 (MAAAAGAAAAAAAEGEAPAEMGA) are compositionally biased toward low complexity. Disordered stretches follow at residues 1–262 (MAAA…LEEW) and 280–386 (DERV…EYME). The residue at position 2 (Ala2) is an N-acetylalanine. Positions 26–38 (LEKETRGATERVH) are enriched in basic and acidic residues. Residue Ser40 is modified to Phosphoserine. Thr44 carries the post-translational modification Phosphothreonine. Residue Ser47 is modified to Phosphoserine. Positions 105–128 (GRILLGHATKSFPSSPSKGGSCPS) are enriched in low complexity. Ser140 carries the post-translational modification Phosphoserine. Residues 155-165 (PGAQGAAAAGS) show a composition bias toward low complexity. Phosphoserine is present on Ser173. Position 185 is an N6,N6,N6-trimethyllysine; by EHMT2; alternate (Lys185). An N6,N6-dimethyllysine; by EHMT2; alternate modification is found at Lys185. The span at 198-216 (PEKRPPEIQHFRMSDDVHS) shows a compositional bias: basic and acidic residues. Residues Lys219 and Lys229 each participate in a glycyl lysine isopeptide (Lys-Gly) (interchain with G-Cter in SUMO2) cross-link. 3 positions are modified to phosphoserine: Ser232, Ser242, and Ser246. The span at 280-291 (DERVDSDSKSEV) shows a compositional bias: basic and acidic residues. Residues 298-327 (LSEEEEEEEEEEEEEEEEEEEEEEEEDEES) show a composition bias toward acidic residues. Over residues 338–347 (GRRKAKKKWR) the composition is skewed to basic residues. Phosphoserine is present on residues Ser350, Ser412, and Ser413. The segment at 548–608 (IPRGDGVTPP…LADTIDSSGP (61 aa)) is disordered. Phosphothreonine is present on Thr555. Ser569 bears the Phosphoserine mark. Lys634 participates in a covalent cross-link: Glycyl lysine isopeptide (Lys-Gly) (interchain with G-Cter in SUMO2). ANK repeat units follow at residues 649 to 678 (FHPRQLYLSVKQGELQKVILMLLDNLDPNF), 684 to 713 (SKRTPLHAAAQKGSVEICHVLLQAGANINA), 717 to 746 (QQRTPLMEAVVNNHLEVARYMVQRGGCVYS), 750 to 780 (DGSTCLHHAAKIGNLEMVSLLLSTGQVDVNA), 784 to 813 (GGWTPIIWAAEHKHIEVIRMLLTRGADVTL), 817 to 846 (EENICLHWASFTGSAAIAEVLLNARCDLHA), and 850 to 879 (HGDTPLHIAARESYHDCVLLFLSRGANPEL). Residues 817-819 (EEN) form a histone H3K9me binding region. In terms of domain architecture, Pre-SET spans 972–1035 (QHCTCVDDCS…NCKNRVVQSG (64 aa)). Residues Cys974, Cys976, Cys980, Cys985, Cys987, Cys1017, Cys1021, Cys1023, and Cys1027 each contribute to the Zn(2+) site. An SET domain is found at 1038–1155 (VRLQLYRTAK…TGEELGFDYG (118 aa)). Residues 1048-1050 (MGW), Tyr1085, and 1112-1113 (NH) contribute to the S-adenosyl-L-methionine site. The segment at 1074-1093 (DAEADVREDDSYLFDLDNKD) is interaction with histone H3. Cys1115 is a Zn(2+) binding site. The tract at residues 1154 to 1157 (YGDR) is interaction with histone H3. In terms of domain architecture, Post-SET spans 1164–1180 (KYFTCQCGSEKCKHSAE). Residue Cys1168 coordinates Zn(2+). S-adenosyl-L-methionine is bound at residue Gln1169. Residues Cys1170 and Cys1175 each contribute to the Zn(2+) site. Phosphoserine is present on Ser1204. Thr1210 carries the post-translational modification Phosphothreonine.

The protein belongs to the class V-like SAM-binding methyltransferase superfamily. Histone-lysine methyltransferase family. Suvar3-9 subfamily. Heterodimer; heterodimerizes with EHMT1/GLP. Interacts with GFI1B and WIZ. Part of the E2F6.com-1 complex in G0 phase composed of E2F6, MGA, MAX, TFDP1, CBX3, BAT8, EHMT1, RING1, RNF2, MBLR, L3MBTL2 and YAF2. Part of a complex composed of TRIM28, HDAC1, HDAC2 and EHMT2. Interacts with UHRF1. Interacts with CDYL. Interacts with REST only in the presence of CDYL. Part of a complex containing at least CDYL, REST, WIZ, SETB1, EHMT1 and EHMT2. Interacts with PRDM9 and CDYL; interaction only takes place when PRDM9 is bound to hotspot DNA. Interacts with SMYD5. Methylated at Lys-185; automethylated. Expressed in all tissues examined, with high levels in fetal liver, thymus, lymph node, spleen and peripheral blood leukocytes and lower level in bone marrow.

It localises to the nucleus. Its subcellular location is the chromosome. It catalyses the reaction N(6)-methyl-L-lysyl(9)-[histone H3] + S-adenosyl-L-methionine = N(6),N(6)-dimethyl-L-lysyl(9)-[histone H3] + S-adenosyl-L-homocysteine + H(+). The enzyme catalyses L-lysyl(9)-[histone H3] + S-adenosyl-L-methionine = N(6)-methyl-L-lysyl(9)-[histone H3] + S-adenosyl-L-homocysteine + H(+). Functionally, histone methyltransferase that specifically mono- and dimethylates 'Lys-9' of histone H3 (H3K9me1 and H3K9me2, respectively) in euchromatin. H3K9me represents a specific tag for epigenetic transcriptional repression by recruiting HP1 proteins to methylated histones. Also mediates monomethylation of 'Lys-56' of histone H3 (H3K56me1) in G1 phase, leading to promote interaction between histone H3 and PCNA and regulating DNA replication. Also weakly methylates 'Lys-27' of histone H3 (H3K27me). Also required for DNA methylation, the histone methyltransferase activity is not required for DNA methylation, suggesting that these 2 activities function independently. Probably targeted to histone H3 by different DNA-binding proteins like E2F6, MGA, MAX and/or DP1. May also methylate histone H1. In addition to the histone methyltransferase activity, also methylates non-histone proteins: mediates dimethylation of 'Lys-373' of p53/TP53. Also methylates CDYL, WIZ, ACIN1, DNMT1, HDAC1, ERCC6, KLF12 and itself. This chain is Histone-lysine N-methyltransferase EHMT2 (EHMT2), found in Homo sapiens (Human).